A 299-amino-acid chain; its full sequence is Tyrosine recombinase XerC (299 aa).

The Core-binding (CB) domain maps to 1 to 85 (MERQLDAYCE…AVRGLYHYLN (85 aa)). A Tyr recombinase domain is found at 106–285 (RLPKTLDTDR…DFQHLATVYD (180 aa)). Residues arginine 146, lysine 170, histidine 237, arginine 240, and histidine 263 contribute to the active site. Tyrosine 272 functions as the O-(3'-phospho-DNA)-tyrosine intermediate in the catalytic mechanism.

This sequence belongs to the 'phage' integrase family. XerC subfamily. In terms of assembly, forms a cyclic heterotetrameric complex composed of two molecules of XerC and two molecules of XerD.

It localises to the cytoplasm. Functionally, site-specific tyrosine recombinase, which acts by catalyzing the cutting and rejoining of the recombining DNA molecules. The XerC-XerD complex is essential to convert dimers of the bacterial chromosome into monomers to permit their segregation at cell division. It also contributes to the segregational stability of plasmids. This Pseudomonas fluorescens protein is Tyrosine recombinase XerC.